Reading from the N-terminus, the 211-residue chain is Ubiquitin-conjugating enzyme E2 S-B (211 aa).

Residues 11–157 (HIIRRVYKEV…ARLMTDIHAQ (147 aa)) form the UBC core domain. Cysteine 95 serves as the catalytic Glycyl thioester intermediate. Residues 158–211 (GTSLRGKDPTDPCSSASTPVVSGDGPMAKKHAGDRDKKLAAKKKTDKKRALRRL) are disordered. The segment covering 197-211 (AAKKKTDKKRALRRL) has biased composition (basic residues).

The protein belongs to the ubiquitin-conjugating enzyme family.

The enzyme catalyses S-ubiquitinyl-[E1 ubiquitin-activating enzyme]-L-cysteine + [E2 ubiquitin-conjugating enzyme]-L-cysteine = [E1 ubiquitin-activating enzyme]-L-cysteine + S-ubiquitinyl-[E2 ubiquitin-conjugating enzyme]-L-cysteine.. Its pathway is protein modification; protein ubiquitination. Its function is as follows. Catalyzes the covalent attachment of ubiquitin to other proteins. Acts as an essential factor of the anaphase promoting complex/cyclosome (APC/C), a cell cycle-regulated ubiquitin ligase that controls progression through mitosis. Acts by specifically elongating 'Lys-11'-linked polyubiquitin chains initiated by the E2 enzyme ube2c/ubch10 on APC/C substrates, enhancing the degradation of APC/C substrates by the proteasome and promoting mitotic exit. This Xenopus laevis (African clawed frog) protein is Ubiquitin-conjugating enzyme E2 S-B (ube2s-b).